The primary structure comprises 426 residues: Ankyrin repeat-containing protein BDA1 (426 aa).

6 ANK repeats span residues 1-29, 36-65, 70-99, 104-134, 138-167, and 182-212; these read MDSKLLLVTQSGSVDDLYSLIQAAPDILQ, IIHTPLHEASSAGKLDLAMELMILKPSFAK, YGLSPLHLAVENDQVELALELVKVDPSLVR, GGMTPLHLVAKKGDVDLLTDFLLACPESIKD, NGETILHITIMNDKYEQLKVLTGWMQKMRD, and GGNTVLHLAAYENNDKVVKQLVKCLSLDRNI. The next 4 membrane-spanning stretches (helical) occupy residues 288 to 308, 329 to 349, 355 to 375, and 380 to 400; these read ALLVIAALIISATFQTAAQLL, WGCNTVAFSIAILFSFILLPV, WWYFIITVPLVFSYFLLMYMM, and FFFLIIYEGGLFLVYLLVLYV.

Its subcellular location is the cell membrane. Functionally, involved in plant defense. Required for basal resistance against Pseudomonas syringae pv. tomato DC3000. Required for resistance against nonpathogenic bacteria. May be involved in signaling components that function downstream of SNC2 and upstream of NPR1 and WRKY70 to regulate defense responses. The polypeptide is Ankyrin repeat-containing protein BDA1 (Arabidopsis thaliana (Mouse-ear cress)).